The chain runs to 1910 residues: Endoribonuclease dcr-1 (1910 aa).

The Helicase ATP-binding domain occupies 20–201 (LLDKATKKNT…KLMEQLKKLE (182 aa)). Residue 33 to 40 (LGTGSGKT) coordinates ATP. The DEAH box motif lies at 145-148 (DECH). The Helicase C-terminal domain occupies 371–542 (EFQKERMKLE…TVNNPIEDDS (172 aa)). Residues 571 to 667 (AIALINRYCS…LPKGRESIAK (97 aa)) form the Dicer dsRNA-binding fold domain. The PAZ domain maps to 845–1003 (YVSEVVANME…LVPELMDIHP (159 aa)). 3 disordered regions span residues 951-988 (RIQN…VPHS), 1227-1248 (TASS…KQLT), and 1272-1309 (LEMS…PTNF). 2 stretches are compositionally biased toward polar residues: residues 970 to 988 (IPQA…VPHS) and 1227 to 1245 (TASS…SPPK). The stretch at 1245–1280 (KQLTKEEEQFKKLQNDLLKQAKERLEALEMSEDMEK) forms a coiled coil. The span at 1272–1286 (LEMSEDMEKPRRLED) shows a compositional bias: basic and acidic residues. Residues 1288-1304 (VNLEDYGDDQENQEDEN) are compositionally biased toward acidic residues. 2 RNase III domains span residues 1381–1589 (VSHI…LTLG) and 1643–1805 (FTQL…LDSG). Residues Glu1682, Asp1791, and Glu1794 each contribute to the Mg(2+) site. The region spanning 1833-1896 (SPIRELMEFE…AKRALKYLHQ (64 aa)) is the DRBM domain.

This sequence belongs to the helicase family. Dicer subfamily. Component of the ERI/DICER complex at least composed of dcr-1, rrf-3 and eri-1. Interacts with pir-1. It depends on Mg(2+) as a cofactor. Mn(2+) is required as a cofactor.

Its function is as follows. Component of the ERI/DICER complex which is involved in processing amplified double-stranded RNA (dsRNA) intermediates during small-RNA-mediated gene-silencing or RNA interference (RNAi). Involved in cleaving dsRNA in the RNAi pathway. It produces 21 to 23 bp dsRNAs (siRNAs) which target the selective destruction of homologous RNAs. Seems to process the precursor of the small temporal RNA let-7 which is involved in developmental timing. Required for avoidance behavior induced by small RNAs derived from pathogenic bacteria such as P.aeruginosa. Involved in innate immunity through its role in small RNA processing. TDCR-1 acts as a deoxyribonuclease (DNase) initiating DNA fragmentation during apoptosis, upstream of nucleases cps-6, crn-2 and nuc-1. The sequence is that of Endoribonuclease dcr-1 from Caenorhabditis elegans.